The primary structure comprises 264 residues: Short chain dehydrogenase/reductase dmxR18 (264 aa).

The NADP(+) site is built by I24, D70, N97, and R130. Residues S146 and S147 each act as proton donor in the active site. NADP(+) is bound by residues Y161, K165, and T196. Y161 serves as the catalytic Proton acceptor. Residue K165 is the Lowers pKa of active site Tyr of the active site.

Belongs to the short-chain dehydrogenases/reductases (SDR) family.

It catalyses the reaction 3,8,9,10-tetrahydroxy-6-methyl-1,4-dihydroanthracen-1-one + NADPH + H(+) = (3R)-3,8,9,10-tetrahydroxy-6-methyl-1,2,3,4-tetrahydroanthracen-1-one + NADP(+). Its pathway is secondary metabolite biosynthesis. Short chain dehydrogenase/reductase; part of the gene cluster that mediates the biosynthesis of the dimeric xanthones cryptosporioptides. The pathway begins with the synthesis of atrochrysone thioester by the polyketide synthase dmx-nrPKS. The atrochrysone carboxyl ACP thioesterase dmxR1 then breaks the thioester bond and releases the atrochrysone carboxylic acid from dmx-nrPKS. Atrochrysone carboxylic acid is decarboxylated by the decarboxylase dmxR15, and oxidized by the anthrone oxygenase dmxR16 to yield emodin. Emodin is then reduced to emodin hydroquinone by the oxidoreductase dmxR7. A-ring reduction by the short chain dehydrogenase dmxR18, dehydration by the scytalone dehydratase-like protein dmxR17 and probable spontaneous re-oxidation, results in overall deoxygenation to chrysophanol. Baeyer-Villiger oxidation by the Baeyer-Villiger monooxygenase (BVMO) dmxR6 then yields monodictylactone in equilibrium with monodictyphenone. In the case of the cryptosporioptides biosynthesis, monodictylactone is reduced at C-12 to an alcohol (by the short chain dehydrogenases dmxR12 or dmxR8) and hydroxylated at C-5 by dmxR9, yielding the electron-rich aromatic which could eliminate H(2)O to form the ortho-quinonemethide, followed by tautomerisation to paraquinone and complete the formal reduction to produce the 10-methylgroup. Conjugate addition of C-4a-OH to the resulting paraquinone by the monooxygenase dmxR10 then gives cyclohexadienone, which is then reduced at C-5 by the short chain dehydrogenase dmxR3 to give the dihydroxanthone. The 6,7-epoxide in the cryptosporioptides could be introduced by the cytochrome P450 monooxygenase dmxL3. The highly reducing PKS dmxL2 manufactures butyrate, which is further carboxylated by dmxL1 to form ethylmalonate. It is not yet clear whether the carboxylation occurs while the butyrate is attached to the ACP of dmxL2, but this unusual fungal metabolite could then be esterified to O-5 by the O-acetyltransferase dmxR13. Finally, dimerization performed by dmxR5 gives the observed dimers cryptosporioptides A, B and C as the final products of the pathway. The protein is Short chain dehydrogenase/reductase dmxR18 of Cryptosporiopsis sp. (strain 8999).